The following is a 594-amino-acid chain: UvrABC system protein C (594 aa).

In terms of domain architecture, GIY-YIG spans Asn-13–Ile-99. In terms of domain architecture, UVR spans Asp-205–Ile-240.

It belongs to the UvrC family. Interacts with UvrB in an incision complex.

It is found in the cytoplasm. Functionally, the UvrABC repair system catalyzes the recognition and processing of DNA lesions. UvrC both incises the 5' and 3' sides of the lesion. The N-terminal half is responsible for the 3' incision and the C-terminal half is responsible for the 5' incision. The chain is UvrABC system protein C from Helicobacter pylori (strain ATCC 700392 / 26695) (Campylobacter pylori).